Reading from the N-terminus, the 115-residue chain is Na(+)/H(+) antiporter subunit C1 (115 aa).

3 consecutive transmembrane segments (helical) span residues 1–21 (MEII…YLVL), 28–48 (IIMG…TMGG), and 72–92 (LILT…VLAF).

It belongs to the CPA3 antiporters (TC 2.A.63) subunit C family. May form a heterooligomeric complex that consists of seven subunits: mnhA1, mnhB1, mnhC1, mnhD1, mnhE1, mnhF1 and mnhG1.

It localises to the cell membrane. Its function is as follows. Mnh complex is a Na(+)/H(+) antiporter involved in Na(+) excretion. In Staphylococcus epidermidis (strain ATCC 35984 / DSM 28319 / BCRC 17069 / CCUG 31568 / BM 3577 / RP62A), this protein is Na(+)/H(+) antiporter subunit C1 (mnhC1).